A 260-amino-acid chain; its full sequence is 5'-nucleotidase SurE (260 aa).

A divalent metal cation is bound by residues Asp-8, Asp-9, Ser-43, and Asn-96.

It belongs to the SurE nucleotidase family. A divalent metal cation is required as a cofactor.

The protein resides in the cytoplasm. It carries out the reaction a ribonucleoside 5'-phosphate + H2O = a ribonucleoside + phosphate. In terms of biological role, nucleotidase that shows phosphatase activity on nucleoside 5'-monophosphates. This chain is 5'-nucleotidase SurE, found in Ruegeria sp. (strain TM1040) (Silicibacter sp.).